A 298-amino-acid chain; its full sequence is Glycine--tRNA ligase alpha subunit (298 aa).

The protein belongs to the class-II aminoacyl-tRNA synthetase family. Tetramer of two alpha and two beta subunits.

It is found in the cytoplasm. It catalyses the reaction tRNA(Gly) + glycine + ATP = glycyl-tRNA(Gly) + AMP + diphosphate. This chain is Glycine--tRNA ligase alpha subunit, found in Gloeothece citriformis (strain PCC 7424) (Cyanothece sp. (strain PCC 7424)).